We begin with the raw amino-acid sequence, 357 residues long: Holliday junction branch migration complex subunit RuvB (357 aa).

Residues 1-10 (MAIQSDSLSS) show a composition bias toward polar residues. The disordered stretch occupies residues 1–30 (MAIQSDSLSSRPDAPRLVAPAPASPNEESI). Positions 5–195 (SDSLSSRPDA…FGIVSRLEFY (191 aa)) are large ATPase domain (RuvB-L). ATP is bound by residues leucine 34, arginine 35, glycine 76, lysine 79, threonine 80, threonine 81, 142–144 (EDF), arginine 185, tyrosine 195, and arginine 232. Residue threonine 80 coordinates Mg(2+). Residues 196–266 (NTDDLAHIVT…AANQALAMLE (71 aa)) form a small ATPAse domain (RuvB-S) region. Positions 269 to 357 (PQGLDLMDRK…QPSSGDLFGA (89 aa)) are head domain (RuvB-H). Arginine 305, arginine 324, and arginine 329 together coordinate DNA.

The protein belongs to the RuvB family. Homohexamer. Forms an RuvA(8)-RuvB(12)-Holliday junction (HJ) complex. HJ DNA is sandwiched between 2 RuvA tetramers; dsDNA enters through RuvA and exits via RuvB. An RuvB hexamer assembles on each DNA strand where it exits the tetramer. Each RuvB hexamer is contacted by two RuvA subunits (via domain III) on 2 adjacent RuvB subunits; this complex drives branch migration. In the full resolvosome a probable DNA-RuvA(4)-RuvB(12)-RuvC(2) complex forms which resolves the HJ.

Its subcellular location is the cytoplasm. It catalyses the reaction ATP + H2O = ADP + phosphate + H(+). In terms of biological role, the RuvA-RuvB-RuvC complex processes Holliday junction (HJ) DNA during genetic recombination and DNA repair, while the RuvA-RuvB complex plays an important role in the rescue of blocked DNA replication forks via replication fork reversal (RFR). RuvA specifically binds to HJ cruciform DNA, conferring on it an open structure. The RuvB hexamer acts as an ATP-dependent pump, pulling dsDNA into and through the RuvAB complex. RuvB forms 2 homohexamers on either side of HJ DNA bound by 1 or 2 RuvA tetramers; 4 subunits per hexamer contact DNA at a time. Coordinated motions by a converter formed by DNA-disengaged RuvB subunits stimulates ATP hydrolysis and nucleotide exchange. Immobilization of the converter enables RuvB to convert the ATP-contained energy into a lever motion, pulling 2 nucleotides of DNA out of the RuvA tetramer per ATP hydrolyzed, thus driving DNA branch migration. The RuvB motors rotate together with the DNA substrate, which together with the progressing nucleotide cycle form the mechanistic basis for DNA recombination by continuous HJ branch migration. Branch migration allows RuvC to scan DNA until it finds its consensus sequence, where it cleaves and resolves cruciform DNA. The polypeptide is Holliday junction branch migration complex subunit RuvB (Bordetella avium (strain 197N)).